The sequence spans 572 residues: Mitochondrial chaperone TCM62 (572 aa).

Residues 1–16 (MLRNCLRKLGNHQTKC) constitute a mitochondrion transit peptide. Topologically, residues 17–471 (SVKTLHTPIY…KANEPNFMTK (455 aa)) are mitochondrial matrix. Residues 472-488 (VGINAVLSAVILPSEVA) form a helical membrane-spanning segment. At 489–572 (FKNAYGYNYY…VYKKPERHKA (84 aa)) the chain is on the mitochondrial intermembrane side.

It belongs to the chaperonin (HSP60) family. Forms a high molecular mass protein complex of approximately 850 kDa.

It is found in the mitochondrion inner membrane. Functionally, chaperone. Required for the assembly of succinate dehydrogenase subunits. Ensures mitochondrial gene expression at elevated temperatures and prevents heat-aggregation of the ribosomal subunit VAR1. The protein is Mitochondrial chaperone TCM62 (TCM62) of Saccharomyces cerevisiae (strain YJM789) (Baker's yeast).